A 422-amino-acid polypeptide reads, in one-letter code: Alcohol dehydrogenase 4 (422 aa).

A mitochondrion-targeting transit peptide spans 1–29 (MSILRSPFRLIRSPARFFPSLFHSSCNQS). Residues D82, N114, G141, S142, T181, T182, T190, F192, K203, and G225 each contribute to the NAD(+) site. Fe(2+) is bound by residues D237, H241, and H306. Residues H310 and H320 each coordinate NAD(+). Position 320 (H320) interacts with Fe(2+).

Belongs to the iron-containing alcohol dehydrogenase family. Zn(2+) serves as cofactor.

It is found in the mitochondrion matrix. It carries out the reaction a primary alcohol + NAD(+) = an aldehyde + NADH + H(+). The enzyme catalyses a secondary alcohol + NAD(+) = a ketone + NADH + H(+). The catalysed reaction is ethanol + NAD(+) = acetaldehyde + NADH + H(+). In terms of biological role, involved in ethanol oxidation in mitochondria. This is Alcohol dehydrogenase 4 (adh4) from Schizosaccharomyces pombe (strain 972 / ATCC 24843) (Fission yeast).